The following is a 570-amino-acid chain: Nucleoprotein (570 aa).

Positions 54–236 (LRKTKRTDDD…ITKEESSINI (183 aa)) are binding site for the cap structure m7GTP. The disordered stretch occupies residues 332 to 356 (DLTKKPDAVPEPGAAPRPAERKGQN). Mg(2+) is bound by residues aspartate 386 and glutamate 388. Positions 386 and 388 each coordinate Mn(2+). The Zn(2+) site is built by glutamate 396, cysteine 503, histidine 506, and cysteine 531. Aspartate 535 serves as a coordination point for Mg(2+). Aspartate 535 contacts Mn(2+).

The protein belongs to the arenaviridae nucleocapsid protein family. Homomultimerizes to form the nucleocapsid. Binds to viral genomic RNA. Interacts with glycoprotein G2. Interacts with protein Z; this interaction probably directs the encapsidated genome to budding sites. Interacts with protein L; this interaction does not interfere with Z-L interaction. Interacts with host IKBKE (via Protein kinase domain); the interaction inhibits IKBKE kinase activity.

Its subcellular location is the virion. The protein localises to the host cytoplasm. Functionally, encapsidates the genome, protecting it from nucleases. The encapsidated genomic RNA is termed the nucleocapsid (NC). Serves as template for viral transcription and replication. The increased presence of protein N in host cell does not seem to trigger the switch from transcription to replication as observed in other negative strain RNA viruses. Through the interaction with host IKBKE, strongly inhibits the phosphorylation and nuclear translocation of host IRF3, a protein involved in interferon activation pathway, leading to the inhibition of interferon-beta and IRF3-dependent promoters activation. Also encodes a functional 3'-5' exoribonuclease that degrades preferentially dsRNA substrates and thereby participates in the suppression of interferon induction. The protein is Nucleoprotein of Artibeus (neotropical fruit bats).